A 563-amino-acid polypeptide reads, in one-letter code: Inositol-3-phosphate synthase 1-B (563 aa).

This sequence belongs to the myo-inositol 1-phosphate synthase family. NAD(+) serves as cofactor.

The protein resides in the cytoplasm. It carries out the reaction D-glucose 6-phosphate = 1D-myo-inositol 3-phosphate. It participates in polyol metabolism; myo-inositol biosynthesis; myo-inositol from D-glucose 6-phosphate: step 1/2. Functionally, key enzyme in myo-inositol biosynthesis pathway that catalyzes the conversion of glucose 6-phosphate to 1-myo-inositol 1-phosphate in a NAD-dependent manner. Rate-limiting enzyme in the synthesis of all inositol-containing compounds. The protein is Inositol-3-phosphate synthase 1-B (isyna1-b) of Xenopus laevis (African clawed frog).